The following is a 101-amino-acid chain: DNA-binding protein Fis (101 aa).

The segment at residues 77–96 is a DNA-binding region (H-T-H motif); sequence QTRAANMLGINRGTLRKKLK.

It belongs to the transcriptional regulatory Fis family. Homodimer.

Functionally, activates ribosomal RNA transcription. Plays a direct role in upstream activation of rRNA promoters. This chain is DNA-binding protein Fis, found in Shewanella sediminis (strain HAW-EB3).